A 90-amino-acid chain; its full sequence is Evasin P1126 (90 aa).

The signal sequence occupies residues 1 to 25; it reads MTSHSAVRIAIFAVIALHSIFECLS. Disulfide bonds link Cys-46–Cys-62, Cys-50–Cys-64, and Cys-58–Cys-75. Asn-55 carries an N-linked (GlcNAc...) asparagine glycan. The N-linked (GlcNAc...) asparagine glycan is linked to Asn-77.

It localises to the secreted. In terms of biological role, salivary chemokine-binding protein which binds to host chemokines CXCL1, CXCL2, CXCL3, CXCL4, CXCL5, CXCL6, CXCL7, CXCL10 and CXCL11. The sequence is that of Evasin P1126 from Amblyomma cajennense (Cayenne tick).